The chain runs to 141 residues: Nucleoside triphosphatase NudI (141 aa).

The region spanning 1–141 (MRQRTIVCPL…RHTLRLKGLL (141 aa)) is the Nudix hydrolase domain. A Nudix box motif is present at residues 38 to 59 (GGVEPGERIEEALRREIREELG).

Belongs to the Nudix hydrolase family. NudI subfamily. As to quaternary structure, monomer. It depends on Mg(2+) as a cofactor.

It carries out the reaction a ribonucleoside 5'-triphosphate + H2O = a ribonucleoside 5'-phosphate + diphosphate + H(+). The catalysed reaction is a 2'-deoxyribonucleoside 5'-triphosphate + H2O = a 2'-deoxyribonucleoside 5'-phosphate + diphosphate + H(+). The enzyme catalyses dUTP + H2O = dUMP + diphosphate + H(+). It catalyses the reaction dTTP + H2O = dTMP + diphosphate + H(+). It carries out the reaction dCTP + H2O = dCMP + diphosphate + H(+). Its function is as follows. Catalyzes the hydrolysis of nucleoside triphosphates, with a preference for pyrimidine deoxynucleoside triphosphates (dUTP, dTTP and dCTP). The protein is Nucleoside triphosphatase NudI of Salmonella arizonae (strain ATCC BAA-731 / CDC346-86 / RSK2980).